Consider the following 614-residue polypeptide: Translation initiation factor IF-2 (614 aa).

A tr-type G domain is found at 115 to 283; that stretch reads ARAPIVTIMG…ILLIAELNNY (169 aa). The interval 124–131 is G1; the sequence is GHVDHGKT. A GTP-binding site is contributed by 124-131; it reads GHVDHGKT. Residues 149–153 form a G2 region; that stretch reads GITQH. The tract at residues 170-173 is G3; that stretch reads DTPG. GTP contacts are provided by residues 170–174 and 224–227; these read DTPGH and NKMD. The segment at 224–227 is G4; sequence NKMD. The tract at residues 260–262 is G5; sequence SAL.

This sequence belongs to the TRAFAC class translation factor GTPase superfamily. Classic translation factor GTPase family. IF-2 subfamily.

It localises to the cytoplasm. Functionally, one of the essential components for the initiation of protein synthesis. Protects formylmethionyl-tRNA from spontaneous hydrolysis and promotes its binding to the 30S ribosomal subunits. Also involved in the hydrolysis of GTP during the formation of the 70S ribosomal complex. This Ureaplasma parvum serovar 3 (strain ATCC 27815 / 27 / NCTC 11736) protein is Translation initiation factor IF-2.